The sequence spans 733 residues: Microtubule-associated protein tau (733 aa).

A compositionally biased stretch (basic and acidic residues) spans 1–16 (MADPRQEFDTMEDHAG). The tract at residues 1–548 (MADPRQEFDT…PVPMPDLKNV (548 aa)) is disordered. The residue at position 2 (A2) is an N-acetylalanine. Phosphotyrosine; by FYN is present on Y18. A Glycyl lysine isopeptide (Lys-Gly) (interchain with G-Cter in ubiquitin) cross-link involves residue K33. A phosphoserine mark is found at S35 and S50. Over residues 50–60 (SETSDAKSTPT) the composition is skewed to polar residues. Residues T58, T60, and T100 each carry the phosphothreonine modification. R115 carries the omega-N-methylarginine modification. A compositionally biased stretch (polar residues) spans 126 to 137 (SDWTRQQVSSMS). A compositionally biased stretch (basic and acidic residues) spans 157-172 (RPEDIEKSHPASELLR). A Phosphoserine modification is found at S188. Positions 189 to 202 (EEEVDEDLTVDESS) are enriched in acidic residues. The span at 203–212 (QDSPPSQASL) shows a compositional bias: polar residues. 2 stretches are compositionally biased toward basic and acidic residues: residues 270 to 294 (EEGHEAAPEFTFHVEIKASTPKEQD) and 354 to 366 (ASKDRTGNDEKKA). The span at 413–427 (KHVSSVTPRNGSPGT) shows a compositional bias: polar residues. The residue at position 445 (T445) is a Phosphothreonine. R447 is subject to Omega-N-methylarginine. Residue S451 is modified to Phosphoserine. An N6,N6-dimethyllysine; alternate modification is found at K455. K455 carries the N6-acetyllysine; alternate modification. A phosphothreonine mark is found at T461, T467, and T468. S470 is modified (phosphoserine). Position 473 is a phosphothreonine (T473). Phosphoserine is present on residues S477, S483, and S487. Residues 479–506 (EPPKSGERSGYSSPGSPGTPGSRSRTPS) are compositionally biased toward low complexity. Y489 is subject to Phosphotyrosine. Residues S490, S491, and S494 each carry the phosphoserine modification. T497 and T504 each carry phosphothreonine. At S506 the chain carries Phosphoserine. T509 is modified (phosphothreonine). K517 carries the post-translational modification N6-acetyllysine. At T523 the chain carries Phosphothreonine. S527, S529, and S531 each carry phosphoserine. 4 Tau/MAP repeats span residues 536–566 (QTAPVPMPDLKNVRSKIGSTENLKHQPGGGK), 567–597 (VQIINKKLDLSNVQSKCGSKDNIKHVPGGGS), 598–628 (VQIVYKPVDLSKVTSKCGSLGNIHHKPGGGQ), and 629–660 (VEVKSEKLDFKDRVQSKIGSLDNITHVPGGGN). A Glycyl lysine isopeptide (Lys-Gly) (interchain with G-Cter in ubiquitin) cross-link involves residue K546. At K551 the chain carries N6-acetyllysine; alternate. K551 is modified (N6-methyllysine; alternate). A Glycyl lysine isopeptide (Lys-Gly) (interchain with G-Cter in ubiquitin); alternate cross-link involves residue K551. S554 carries the phosphoserine; by MARK1, BRSK1, BRSK2 and PHK modification. Residue K559 forms a Glycyl lysine isopeptide (Lys-Gly) (interchain with G-Cter in ubiquitin) linkage. Position 573 is an N6-acetyllysine; alternate (K573). A Glycyl lysine isopeptide (Lys-Gly) (interchain with G-Cter in ubiquitin); alternate cross-link involves residue K573. Residues S577 and S581 each carry the phosphoserine modification. K582 is subject to N6-acetyllysine. Cysteines 583 and 614 form a disulfide. At S585 the chain carries Phosphoserine. An N6-acetyllysine; alternate modification is found at K590. K590 is covalently cross-linked (Glycyl lysine isopeptide (Lys-Gly) (interchain with G-Cter in ubiquitin); alternate). At S597 the chain carries Phosphoserine. K603 is modified (N6,N6-dimethyllysine; alternate). An N6-acetyllysine; alternate mark is found at K603, K609, and K613. Glycyl lysine isopeptide (Lys-Gly) (interchain with G-Cter in ubiquitin); alternate cross-links involve residues K603, K609, and K613. S616 bears the Phosphoserine mark. An N6-acetyllysine; alternate mark is found at K623, K635, and K639. Glycyl lysine isopeptide (Lys-Gly) (interchain with G-Cter in ubiquitin); alternate cross-links involve residues K623, K635, and K639. R641 is subject to Omega-N-methylarginine. S644 carries the post-translational modification Phosphoserine. A Glycyl lysine isopeptide (Lys-Gly) (interchain with G-Cter in ubiquitin) cross-link involves residue K645. S648 is subject to Phosphoserine. K661 carries the post-translational modification N6-acetyllysine; alternate. A Glycyl lysine isopeptide (Lys-Gly) (interchain with G-Cter in ubiquitin); alternate cross-link involves residue K661. K667 participates in a covalent cross-link: Glycyl lysine isopeptide (Lys-Gly) (interchain with G-Cter in ubiquitin). K677 carries the N6-acetyllysine; alternate modification. Residue K677 forms a Glycyl lysine isopeptide (Lys-Gly) (interchain with G-Cter in ubiquitin); alternate linkage. Position 686 is a phosphotyrosine (Y686). S688 carries the phosphoserine modification. The disordered stretch occupies residues 690 to 709 (VVSGDTSPRHLSNVSSTGSI). At S692 the chain carries Phosphoserine; alternate. An O-linked (GlcNAc...) serine; alternate glycan is attached at S692. Over residues 693 to 708 (GDTSPRHLSNVSSTGS) the composition is skewed to polar residues. Residue T695 is modified to Phosphothreonine. Phosphoserine occurs at positions 696, 701, 708, and 714. T719 bears the Phosphothreonine mark.

In terms of assembly, interacts with MARK1, MARK2, MARK3 and MARK4. Interacts with SQSTM1 when polyubiquitinated. Interacts with PSMC2 through SQSTM1. Interacts with FKBP4. Binds to CSNK1D. Interacts with SGK1. Interacts with EPM2A; the interaction dephosphorylates MAPT at Ser-369. Interacts with PIN1. Interacts with LRRK2. Interacts with LRP1, leading to endocytosis; this interaction is reduced in the presence of LRPAP1/RAP. Post-translationally, polyubiquitinated. Requires functional TRAF6 and may provoke SQSTM1-dependent degradation by the proteasome. Phosphorylation at various serine and threonine residues in S-P or T-P motifs by proline-directed protein kinases (PDPK1, CDK1, CDK5, GSK3, MAPK) (a few sites per protein in interphase, more in mitosis), and at serine residues in K-X-G-S motifs by MAP/microtubule affinity-regulating kinase (MARK1, MARK2, MARK3, MARK4), causing detachment from microtubules, and their disassembly. Phosphorylated by PHK. Dephosphorylation at several serine and threonine residues by the serine/threonine phosphatase PPP5C. Phosphorylation at Ser-554 by BRSK1 and BRSK2 in neurons affects ability to bind microtubules and plays a role in neuron polarization. Phosphorylation at Ser-188 by SGK1 mediates microtubule depolymerization and neurite formation in hippocampal neurons. As to expression, expressed in neurons and at a lower level in the liver and kidney. Isoform PNS-tau is expressed in the peripheral nervous system while the others are expressed in the central nervous system.

It is found in the cytoplasm. The protein localises to the cytosol. The protein resides in the cell membrane. It localises to the cytoskeleton. Its subcellular location is the cell projection. It is found in the axon. The protein localises to the dendrite. The protein resides in the secreted. Its function is as follows. Promotes microtubule assembly and stability, and might be involved in the establishment and maintenance of neuronal polarity. The C-terminus binds axonal microtubules while the N-terminus binds neural plasma membrane components, suggesting that tau functions as a linker protein between both. Axonal polarity is predetermined by tau localization (in the neuronal cell) in the domain of the cell body defined by the centrosome. The short isoforms allow plasticity of the cytoskeleton whereas the longer isoforms may preferentially play a role in its stabilization. The protein is Microtubule-associated protein tau of Mus musculus (Mouse).